The chain runs to 73 residues: Cytochrome b559 subunit alpha (73 aa).

Residues 21–35 (IIHSITVPSLFIAGW) form a helical membrane-spanning segment. H23 contacts heme.

Belongs to the PsbE/PsbF family. In terms of assembly, heterodimer of an alpha subunit and a beta subunit. PSII is composed of 1 copy each of membrane proteins PsbA, PsbB, PsbC, PsbD, PsbE, PsbF, PsbH, PsbI, PsbJ, PsbK, PsbL, PsbM, PsbT, PsbY, PsbZ, Psb30/Ycf12, at least 3 peripheral proteins of the oxygen-evolving complex and a large number of cofactors. It forms dimeric complexes. Requires heme b as cofactor.

It localises to the plastid. It is found in the chloroplast thylakoid membrane. In terms of biological role, this b-type cytochrome is tightly associated with the reaction center of photosystem II (PSII). PSII is a light-driven water:plastoquinone oxidoreductase that uses light energy to abstract electrons from H(2)O, generating O(2) and a proton gradient subsequently used for ATP formation. It consists of a core antenna complex that captures photons, and an electron transfer chain that converts photonic excitation into a charge separation. The sequence is that of Cytochrome b559 subunit alpha from Bigelowiella natans (Pedinomonas minutissima).